The sequence spans 279 residues: Diaminopimelate epimerase (279 aa).

The substrate site is built by Asn13 and Asn66. Cys75 functions as the Proton donor in the catalytic mechanism. Substrate-binding positions include 76-77 (GN), Asn164, Asn197, and 215-216 (ER). Catalysis depends on Cys224, which acts as the Proton acceptor. 225–226 (GT) lines the substrate pocket.

It belongs to the diaminopimelate epimerase family. As to quaternary structure, homodimer.

The protein resides in the cytoplasm. It carries out the reaction (2S,6S)-2,6-diaminopimelate = meso-2,6-diaminopimelate. It participates in amino-acid biosynthesis; L-lysine biosynthesis via DAP pathway; DL-2,6-diaminopimelate from LL-2,6-diaminopimelate: step 1/1. In terms of biological role, catalyzes the stereoinversion of LL-2,6-diaminopimelate (L,L-DAP) to meso-diaminopimelate (meso-DAP), a precursor of L-lysine and an essential component of the bacterial peptidoglycan. This Nostoc punctiforme (strain ATCC 29133 / PCC 73102) protein is Diaminopimelate epimerase.